A 483-amino-acid chain; its full sequence is MTVQTFIPNGAKAASENTVTQPTHTTDVSIKKLYIETQGCQMNEYDSHRMADLLGDSHGYVLTNNPNEADILLMNTCSIREKAQEKVFSELGRWRKLKEQNPDLVIGVGGCVASQEGDNIQKRAPYVDMIFGPQTLHRLPQMLDQHHAQVEKPKKEKIKLVDISFPDIEKFDFLPEPRVEGFKAFVSIMEGCSKYCSFCVVPYTRGEEVSRPLDDVLAEIAGLAEKGVREISLLGQNVNGYRGETFEGGICTFPELLRLVAEIPGIGRLRYTTSHPLEFSDELIQCYEDLPQMVSHLHLPVQSGSNDVLKAMKRNHTIDVYIDKIAKLRKIRPDMHLSSDFIIGFPGETDENFAETLQFIKDLDFDHSYSFVYSKRPGTPASDLPDTTPEHVKKERLAQVQQVIKQSSIEKTDAMLGKIERVLIEKVSDQDPNILVGTADNTRLVTFVGDASWVGRFAEIEITEIKTLNLVYGELLNLEPDVA.

The region spanning 31 to 148 (KKLYIETQGC…LPQMLDQHHA (118 aa)) is the MTTase N-terminal domain. [4Fe-4S] cluster-binding residues include Cys40, Cys77, Cys111, Cys192, Cys196, and Cys199. The 233-residue stretch at 178-410 (RVEGFKAFVS…QQVIKQSSIE (233 aa)) folds into the Radical SAM core domain. In terms of domain architecture, TRAM spans 413–477 (DAMLGKIERV…LNLVYGELLN (65 aa)).

The protein belongs to the methylthiotransferase family. MiaB subfamily. In terms of assembly, monomer. It depends on [4Fe-4S] cluster as a cofactor.

It is found in the cytoplasm. The enzyme catalyses N(6)-dimethylallyladenosine(37) in tRNA + (sulfur carrier)-SH + AH2 + 2 S-adenosyl-L-methionine = 2-methylsulfanyl-N(6)-dimethylallyladenosine(37) in tRNA + (sulfur carrier)-H + 5'-deoxyadenosine + L-methionine + A + S-adenosyl-L-homocysteine + 2 H(+). Its function is as follows. Catalyzes the methylthiolation of N6-(dimethylallyl)adenosine (i(6)A), leading to the formation of 2-methylthio-N6-(dimethylallyl)adenosine (ms(2)i(6)A) at position 37 in tRNAs that read codons beginning with uridine. This chain is tRNA-2-methylthio-N(6)-dimethylallyladenosine synthase, found in Acinetobacter baumannii (strain AB0057).